The sequence spans 222 residues: Sugar fermentation stimulation protein homolog (222 aa).

This sequence belongs to the SfsA family.

This is Sugar fermentation stimulation protein homolog from Thermotoga maritima (strain ATCC 43589 / DSM 3109 / JCM 10099 / NBRC 100826 / MSB8).